The chain runs to 139 residues: ATP synthase epsilon chain (139 aa).

Belongs to the ATPase epsilon chain family. In terms of assembly, F-type ATPases have 2 components, CF(1) - the catalytic core - and CF(0) - the membrane proton channel. CF(1) has five subunits: alpha(3), beta(3), gamma(1), delta(1), epsilon(1). CF(0) has three main subunits: a, b and c.

It localises to the cell inner membrane. Functionally, produces ATP from ADP in the presence of a proton gradient across the membrane. The protein is ATP synthase epsilon chain of Pectobacterium carotovorum subsp. carotovorum (strain PC1).